Reading from the N-terminus, the 346-residue chain is DNA ligase (346 aa).

Residues 32 to 35, Arg39, 55 to 57, Glu93, Glu142, and Arg149 contribute to the ATP site; these read DCKY and RVS. Lys34 serves as the catalytic N6-AMP-lysine intermediate. Residue Glu223 coordinates a divalent metal cation. The ATP site is built by Lys238 and Lys244.

This sequence belongs to the ATP-dependent DNA ligase family. A divalent metal cation serves as cofactor.

It catalyses the reaction ATP + (deoxyribonucleotide)n-3'-hydroxyl + 5'-phospho-(deoxyribonucleotide)m = (deoxyribonucleotide)n+m + AMP + diphosphate.. Functionally, DNA ligase, which is expressed in the early stage of lytic development, has been implicated in T7 DNA synthesis and genetic recombination. It may also play a role in T7 DNA repair. In Enterobacteria phage T3 (Bacteriophage T3), this protein is DNA ligase (1.3).